A 468-amino-acid polypeptide reads, in one-letter code: Nuclear distribution protein PAC1-2 (468 aa).

In terms of domain architecture, LisH spans 13 to 45 (QAEELHKSIIAYLTSLNLATTANTLRAELNLPE). The stretch at 66–92 (SVIRLQKKVLDLQAENAHLKNEIENAG) forms a coiled coil. WD repeat units follow at residues 118 to 159 (GHRL…RTLK), 161 to 201 (HTKA…KNIR), 205 to 251 (GHDH…CVKT), 254 to 293 (GHNDWPRAVAPSADGRWLLSTGSDKAARLWDIGGTEPECR), 298 to 358 (GHEN…IKVL), 360 to 399 (GHDNWVRGLAFHPAGKFLISVADDRTMRCWDLSQDGKCVQ), 404 to 429 (MFDGFVSCVRWAPGITKDGLAGGDAG), and 430 to 468 (DGTPKKKTGAEANGGVQMRCVVATGSVDGTEGKVRIFAN).

The protein belongs to the WD repeat LIS1/nudF family. In terms of assembly, self-associates. Interacts with NDL1 and dynein.

It localises to the cytoplasm. The protein localises to the cytoskeleton. The protein resides in the spindle pole. Functionally, positively regulates the activity of the minus-end directed microtubule motor protein dynein. May enhance dynein-mediated microtubule sliding by targeting dynein to the microtubule plus end. Required for nuclear migration during vegetative growth as well as development. Required for retrograde early endosome (EE) transport from the hyphal tip. Required for localization of dynein to the mitotic spindle poles. Recruits additional proteins to the dynein complex at SPBs. The sequence is that of Nuclear distribution protein PAC1-2 from Podospora anserina (strain S / ATCC MYA-4624 / DSM 980 / FGSC 10383) (Pleurage anserina).